A 528-amino-acid polypeptide reads, in one-letter code: Chromosomal replication initiator protein DnaA (528 aa).

A domain I, interacts with DnaA modulators region spans residues 1 to 104; that stretch reads MNDDPNALAR…PVDDEPESEA (104 aa). A disordered region spans residues 93–159; the sequence is AAPVDDEPES…DFEEVDDDSE (67 aa). A compositionally biased stretch (basic and acidic residues) spans 104 to 123; the sequence is APSRERRPDPEPVHTPRHLE. The domain II stretch occupies residues 105-187; sequence PSRERRPDPE…GPAPAATGGN (83 aa). The segment covering 149 to 159 has biased composition (acidic residues); the sequence is TDFEEVDDDSE. The segment at 188 to 404 is domain III, AAA+ region; it reads SLNAKYTFDT…GALIRVTAFA (217 aa). 4 residues coordinate ATP: G232, G234, K235, and T236. The segment at 405 to 528 is domain IV, binds dsDNA; sequence SLNRQPLDLT…TARIKQRSKR (124 aa).

It belongs to the DnaA family. As to quaternary structure, oligomerizes as a right-handed, spiral filament on DNA at oriC.

It localises to the cytoplasm. Functionally, plays an essential role in the initiation and regulation of chromosomal replication. ATP-DnaA binds to the origin of replication (oriC) to initiate formation of the DNA replication initiation complex once per cell cycle. Binds the DnaA box (a 9 base pair repeat at the origin) and separates the double-stranded (ds)DNA. Forms a right-handed helical filament on oriC DNA; dsDNA binds to the exterior of the filament while single-stranded (ss)DNA is stabiized in the filament's interior. The ATP-DnaA-oriC complex binds and stabilizes one strand of the AT-rich DNA unwinding element (DUE), permitting loading of DNA polymerase. After initiation quickly degrades to an ADP-DnaA complex that is not apt for DNA replication. Binds acidic phospholipids. The protein is Chromosomal replication initiator protein DnaA of Rhodococcus opacus (strain B4).